Reading from the N-terminus, the 87-residue chain is Phospholemman (87 aa).

Positions 1–20 are cleaved as a signal peptide; the sequence is MASLSHILVLWVGILTVVNA. The Extracellular portion of the chain corresponds to 21-35; sequence EAPQEHDPFTYDYQS. Residues 36–56 traverse the membrane as a helical segment; that stretch reads LRIGGLIIAGILFILGILIVL. Topologically, residues 57–87 are cytoplasmic; that stretch reads SRRCRCKFNQQQSLGKMRSPHLAAQFSSESC. A lipid anchor (S-palmitoyl cysteine) is attached at cysteine 60. Position 62 is an S-glutathionyl cysteine; alternate (cysteine 62). Cysteine 62 carries the S-palmitoyl cysteine; alternate lipid modification. Serine 75 bears the Phosphoserine; by PKA and PKC mark. Serine 83 is subject to Phosphoserine; by PKA.

This sequence belongs to the FXYD family. As to quaternary structure, homotetramer. Monomer. Regulatory subunit of the sodium/potassium-transporting ATPase (NKA) which is composed of a catalytic alpha subunit, a non-catalytic beta subunit and an additional regulatory subunit. The monomeric form associates with NKA while the oligomeric form does not. Interacts with the catalytic alpha-1 subunit ATP1A1. Also interacts with the catalytic alpha-2 and alpha-3 subunits ATP1A2 and ATP1A3. Very little interaction with ATP1A1, ATP1A2 or ATP1A3 when phosphorylated at Ser-83. Interacts with the non-catalytic beta-1 subunit ATP1B1. Oxidative stress decreases interaction with ATP1A1 but increases interaction with ATP1B1. In terms of processing, major plasma membrane substrate for cAMP-dependent protein kinase (PKA) and protein kinase C (PKC) in several different tissues. Phosphorylated in response to insulin and adrenergic stimulation. Phosphorylation at Ser-83 stimulates sodium/potassium-transporting ATPase activity while the unphosphorylated form inhibits sodium/potassium-transporting ATPase activity. Phosphorylation increases tetramerization, decreases binding to ATP1A1 and reduces inhibition of ATP1A1 activity. Phosphorylation at Ser-75 leads to greatly reduced interaction with ATP1A1, ATP1A2 and ATP1A3. May be phosphorylated by DMPK. Post-translationally, palmitoylation increases half-life and stability and is enhanced upon phosphorylation at Ser-83 by PKA.

Its subcellular location is the cell membrane. The protein localises to the sarcolemma. It localises to the apical cell membrane. The protein resides in the membrane. It is found in the caveola. Its subcellular location is the T-tubule. In terms of biological role, associates with and regulates the activity of the sodium/potassium-transporting ATPase (NKA) which transports Na(+) out of the cell and K(+) into the cell. Inhibits NKA activity in its unphosphorylated state and stimulates activity when phosphorylated. Reduces glutathionylation of the NKA beta-1 subunit ATP1B1, thus reversing glutathionylation-mediated inhibition of ATP1B1. Contributes to female sexual development by maintaining the excitability of neurons which secrete gonadotropin-releasing hormone. This chain is Phospholemman, found in Sus scrofa (Pig).